The sequence spans 227 residues: Orotidine 5'-phosphate decarboxylase (227 aa).

Substrate is bound by residues Asp8, Lys30, 59-68 (DLKLYDIPYT), Thr118, Arg178, Gln187, Gly207, and Arg208. Catalysis depends on Lys61, which acts as the Proton donor.

It belongs to the OMP decarboxylase family. Type 1 subfamily. In terms of assembly, homodimer.

It catalyses the reaction orotidine 5'-phosphate + H(+) = UMP + CO2. It participates in pyrimidine metabolism; UMP biosynthesis via de novo pathway; UMP from orotate: step 2/2. Functionally, catalyzes the decarboxylation of orotidine 5'-monophosphate (OMP) to uridine 5'-monophosphate (UMP). This chain is Orotidine 5'-phosphate decarboxylase, found in Helicobacter pylori (strain ATCC 700392 / 26695) (Campylobacter pylori).